Consider the following 814-residue polypeptide: MGLPALEFSDCCLDSPHFRETLKSHEAELDKTNKFIKELIKDGKSLISALKNLSSAKRKFADSLNEFKFQCIGDAETDDEMCIARSLQEFAAVLRNLEDERSRMIENASEVLITPLEKFRKEQIGAAREAKKKYDKETEKYCGTLEKHLNLSSKKKESQLQEADSQVDLVRQHFYEVSLEYVFKVQEVQERKMFEFVEPLLAFLQGLFTFYHHGYELAKDFGDFKTQLTISIQNTRNRFEGTRSEVESLMKKMKENPLEHKTISPYTMEGYLYVQEKRHFGTSWVKHYCTYQRDSKQITMVPFDQKSGGKGGEDESVTLKSCTRRKTDSIEKRFCFDVEAVDRPGVITMQALSEEDRRLWMEAMDGREPVYNSNRDSQSEGTAQLDSIGFSIIRKCIHAVETRGINEQGLYRIVGVNSRVQKLLSVLMDPKAASETETDICAEWEIKTVTSALKTYLRMLPGPLMMYQFQRSFIKAAKLENQETRVSEIHSLVHRLPEKNRQMLQLLMNHLANVANNHKQNLMTVANLGVVFGPTLLRPQEETVAAIMDIKFQNIVIEILIENHEKIFNTVPDVPLTNAQLHLSRKKSSDSKPPSCSKRPLTLFHAVPSTEKQEQRNSIINSSLESVSSSANSILNSSSSLQPNLNSSDSNLDVVKPSRPSSLPPNPSPTSPLSPSWPMFSAPSSPMPTSSTSSDSSPIRSVAGFVWFSVAAVVLSLAWSSLHAVFSLLVNFVPCHPNLHLLFDRPEEAVREDSSTPFRKAKALYACQAEHDSELSFTAGTVFDNVHPSQEPGWLEGTLNGKTGLIPENYVEFL.

One can recognise a BAR domain in the interval 7–262; it reads EFSDCCLDSP…MKENPLEHKT (256 aa). A PH domain is found at 265-369; that stretch reads PYTMEGYLYV…WMEAMDGREP (105 aa). The Rho-GAP domain maps to 383 to 568; the sequence is AQLDSIGFSI…ILIENHEKIF (186 aa). Disordered regions lie at residues 584 to 618 and 638 to 696; these read SRKKSSDSKPPSCSKRPLTLFHAVPSTEKQEQRNS and SSSL…SSDS. 2 stretches are compositionally biased toward low complexity: residues 591-600 and 638-661; these read SKPPSCSKRP and SSSLQPNLNSSDSNLDVVKPSRPS. Pro residues predominate over residues 662–672; it reads SLPPNPSPTSP. Phosphoserine is present on Ser668. Thr670 is subject to Phosphothreonine. Position 671 is a phosphoserine (Ser671). The segment covering 673–696 has biased composition (low complexity); that stretch reads LSPSWPMFSAPSSPMPTSSTSSDS. Residues 756 to 814 enclose the SH3 domain; the sequence is TPFRKAKALYACQAEHDSELSFTAGTVFDNVHPSQEPGWLEGTLNGKTGLIPENYVEFL.

Interacts with NYAP1, NYAP2 and MYO16. Interacts with MICAL1 and WDR44. Binds to the C-terminus of PTK2/FAK1. Post-translationally, phosphorylated in a PINK1-dependent fashion promoting retrograde mitochondrial trafficking and clustering.

It localises to the cell junction. Its subcellular location is the focal adhesion. The protein resides in the cytoplasm. It is found in the cytoskeleton. The protein localises to the endosome membrane. GTPase-activating protein for RHOA and CDC42. Facilitates mitochondrial quality control by promoting Parkin-mediated recruitment of autophagosomes to damaged mitochondria. Associates with MICAL1 on the endosomal membrane to promote Rab8-Rab10-dependent tubule extension. After dissociation of MICAL1, recruits WDR44 which connects the endoplasmic reticulum (ER) with the endosomal tubule, thereby participating in the export of a subset of neosynthesized proteins. This Mus musculus (Mouse) protein is Rho GTPase-activating protein 26 (Arhgap26).